A 427-amino-acid polypeptide reads, in one-letter code: Adenylosuccinate synthetase (427 aa).

GTP is bound by residues 12-18 and 40-42; these read GDEGKGK and GHT. Aspartate 13 functions as the Proton acceptor in the catalytic mechanism. Mg(2+) contacts are provided by aspartate 13 and glycine 40. Residues 13–16, 38–41, threonine 128, arginine 142, glutamine 223, threonine 238, and arginine 302 each bind IMP; these read DEGK and NAGH. The Proton donor role is filled by histidine 41. 298–304 contributes to the substrate binding site; the sequence is TTTGRPR. GTP contacts are provided by residues arginine 304, 330 to 332, and 412 to 414; these read KLD and AVG.

It belongs to the adenylosuccinate synthetase family. In terms of assembly, homodimer. It depends on Mg(2+) as a cofactor.

The protein localises to the cytoplasm. The enzyme catalyses IMP + L-aspartate + GTP = N(6)-(1,2-dicarboxyethyl)-AMP + GDP + phosphate + 2 H(+). It functions in the pathway purine metabolism; AMP biosynthesis via de novo pathway; AMP from IMP: step 1/2. Functionally, plays an important role in the de novo pathway of purine nucleotide biosynthesis. Catalyzes the first committed step in the biosynthesis of AMP from IMP. This chain is Adenylosuccinate synthetase, found in Heliobacterium modesticaldum (strain ATCC 51547 / Ice1).